Here is a 522-residue protein sequence, read N- to C-terminus: Glucans biosynthesis protein G (522 aa).

Positions 1–33 (MLDNKFGFKQRVASLRWLSAAIMLSVSAVPAWA) are cleaved as a signal peptide.

Belongs to the OpgD/OpgG family.

It is found in the periplasm. The protein operates within glycan metabolism; osmoregulated periplasmic glucan (OPG) biosynthesis. Involved in the biosynthesis of osmoregulated periplasmic glucans (OPGs). The polypeptide is Glucans biosynthesis protein G (Pectobacterium carotovorum subsp. carotovorum (strain PC1)).